A 166-amino-acid chain; its full sequence is UPF0336 protein ML2425 (166 aa).

The MaoC-like domain occupies 10–131 (LIGKHYRQLD…VIAEVRSEVT (122 aa)).

The protein belongs to the UPF0336 family.

The chain is UPF0336 protein ML2425 from Mycobacterium leprae (strain TN).